A 3527-amino-acid chain; its full sequence is MKWGTLLKDLKDKVGVAETTADLIAGEAISDPTTPPSSSQASPSSSFAALAQHDFNLLSPTSRDKLKLELDFKRYWEEFRSSSSEQEKEAALNLSVNTFCRLVKQHANVDQLVTMLVEPHIFSFVIGRAFVADVEKLKVSSRKRSLDVEKAIEFFSEVTKDGSSHGANLLTAIEVLASGPFDKQSLLDSGILCCLIHTFNAFLTYSVASEGEKTVNYEEKVEGSVVNIMKALASHPSAAQSLIEDDSLQLLFKMVANGSLMAFSRFKVGLVSFHNIQLHKNAMQILGLLLVNDNGSTASYIRKHHLIKVLLMAVKDFDPDCGDSAYTVGIVDLLLECVELSYRPETGGVRLKDDIRNAHGYHFLVQFALILSSMPKDIVFAFDHSSPHKNRGSNDSKKQPPLSLKTRQNDDSEKQQSLSLNSRQNDEFALKHFSPALSRLLDVLVTLAQTGPIESSGTSTSLLSQTKLTGYSRRQTPSANNRYDEPCEQGSGKVKDLEAVQMLQDIFLKAENKDLQAEVLNRMFKIFTSHLENYRICQELKTVPLLVLNMGGFPSSLQELILKILEYAVTVVNCVPEQELLSLCFLLQQPIDSELKHTILSFFVKLTSFDQQYKKVLGEVGVLEVLQDDLKQHKLLRGPDQYSGVSNHLDRVPSSPSFKQHLDSQDAIISSPKLMESGSGKLPIFEVERTITVGWDCMISLLKNSQVNQEAFRSANGVTVILPFLIADEHRTSILRIFSCLITGDIKQVHHEELEALIDVLKSGMVTRVSGDQYKLHYEVRCDIMGALWRIVGVNGSAQRVFGEATGFSLLLTTLHTFQGEEECRDESHLMVYIKLFKHLLRLITTAVCENAINRMKLHSVITSQTFYDLLVESGLLCVDLERHVIQLLLELALEVLVPPFLTSESMASAEMAECEKASFLVKTASGQFNPDKQKIYNAGAVRVLIRSLLLCTPKLQLEFLNLLERLARASPFNKETLTSAGCVELLLEIIYPFLQGSSPFLSHALKIVEVLGAYRLSPSELKMLCRYVMQMRVMNSGPSLIGMMEKLILMEEDTGLECVSLAPFVEMDMSKTGHASVQVSLGERSWPPAAGYSFVCWVQFRNFLTTQELESEVYKAGGSSKTPILSGQQSEQNIFRIFSVNAISNGSPSYAELYFQEDGILTLATSNSNSLSFSGLETEEGKWHHLAVVHSKPNALAGLFQASVAYVYIDGKLRHMGKLGYSPSPVGKSLQVIIGTSATCARACGGDSMAILDLLDTDMSSGIQKFEDSNRQGDSKAHCSGIVWDLDRLGNLSIQLPGKKLIFAFDGTCSEFMRATGSFSLVNLVDPLSAAASLIGGIPRFGRLVGNVSLCRQNVIGNSIRPVGGMAVVLALVEAAESRDMLHMALSLLACALHQNSQNVKDMETYTGYHLLALFLRPKMALFDMQCLEIFFQISACEAFFSEPKKLESGQTTISMSPTEIIPENNYEDPTLCKFQYETSSVGSHGDMDDFSGRKDSFSHLSELEMGDNPVETSNCIVLSNADMVEHVLLDWTLWVTAPVSIQIASLGFLENLISILWYRSHNLAILRQINLVKHLLVTLQRGDVEVLVLEKLVILLRCILENGFLTPELEDVVRFAIMTFNPPEIKSQNSSMRESMGKHVIVRNLVLEMLIDLQVTIKAEELLEQWHKTVSSKLITYFLDGAVHPSSMRWIMTLLGVCLTSSPNFSLKFFASGGYQGLVRVLQSFYDSPDIYYILFCLIFGKPVYPRLPEVRMLDFHALMPDDGSHVELNFVDLLDSVVAMAKSTFDRLIMQSMLAHQSGNLSQVSARCVAELVEGYADMTGELQGKALMHKTYAARLMGGEASAPATATSVIRFMVDLAKMCPQFSAACKNTEFLQKCADLYFSCVRAFHAVKLAKQLSMKAEEQNITGGDDSSVEGNFCRVSHQDMSTKTSISAGSFPQDQTSSVISVDMYIPSDYVAVDKVENFLTTPPGESNKSFQGREYIAKQDGDHVGSVSASSEMKSLDLTGSSSQVQPIDSRSSESFSMLESPLLSEKSSLEVPFIPSPSKSSTISTPHPSHISVSEFDASSDQSSGSQGSSAVHTLFTISPKVLLETDESGYGGGPCSAGASAVLDFMAEVCADIMTEQIKAVQALESILEMLPLYVDPECVVVFQGLCLSRVMNYLERRFLRDDEEDDKKLDKRKWSANLDAFCWMIVDRVYMGAFPQPTGVLRTLEFLLSILQLANKDGRVEEVTSSGKGLLSIGRATRQLDAYVHSILKNTNRTILYCFLPSFLITIGEEDLPSRLGLLVESTKKQTSKLSGKESGIDVSAVLQLLVANKNIILCPSNLDTDLNCCLCVNLISLLHDQRKNVQNMASNIIKYLLVHRKSALEDLLVKKPHRGQKFDVLHGGFDRLLTGNLPEFSKWLESSEQIITKVLEQGAAVMWIQYIAGSAKFPDVRMKGMDGRRTREMGRKLRDTSKLDLKHWEQVNERRYALEVVRDAMSAELRVVRQNKYGLILHAESVWPTHLQQLVHERGIFPMRISHGVEDLKWQLCPIEGPYRMRKKLERCKLKIDSLHNLLEGKLELGEIELLKSKSEDGLVISDMDSEPAFLLSELYSESFSEEADDLKDVPSARNGWNNDRATSTNAASLHNSLSFGGKSSSTAVSVPISVNTDEKSETGSPIKSSSGKMDEIKHVEEESEKELKDDGEYLIRPYLEHLEKIRFRYNCERVVGLDKHDGIFLIGELCLYVIENFYIDDHGCICEKECEDELSIIDQAQGLKKQFHGSLESKSKSSTLWSTTIKIGAVGGRAWAYGGGAWGKEKVRVTGNLPHPWHMWKLDSVHEILKRDYELRRVAVEIFSMDGCNDLLVFHKKEREEVFRNLLAMNLPRNSMLDTTISGSAKQESKEGSRLFKLMAKSFTKRWQNGEISNFQYLMHLNTLAGRGYSDLTQYPVFPWILADYDGESLDLSDPNNFRKLDKPMGCQTPEGEEEFRKRYESWDDPEVPQFHYGSHYSSAGIVLFYLIRLPPFSAENQKLQGGQFDHADRLFNSIRETWLSAAGKGNTSDVKELIPEFFYMPEFLENRFNLDLGEKQSGDKVGDVILPPWARGSVREFIRKHREALESDYVSENLHHWIDLIFGHKQRGKAAENAVNVFYHYTYEGNVDVDAVTDPAMKASILAQINHFGQTPKQLFQKPHVKRRTDRKVPPHPLKHSMHLVPRNIRKCSSSINQIITFNDKLLLTGANCLLKPRGYKKYIRWGFPDRTLRFMSYDQDKLLSTHENLHEGNQIQCAGVSHDGRIVVTGAEDGLVSVWRVSKDGPRGSRRLRLEKSLCAHTAKVICLRVSQPYMMIASSSDDCTVIIWDLSSLSFVRQLPNFSVPVTVVYINDLTGEIVTAAGSVLAVWSINGDCLSVVNTSQLPTDLIVSVAGSTFSDWLETTWYVTGHQSGALKVWRMVHCTDPVSVPSKTPSNRTGGLNLGNQKPEYKLLLHKELKFHKQPVTSLHLTTDLKQLLSGDSAGHLLSWTVPDEILKASLKKAS.

Disordered stretches follow at residues 25–46, 385–423, and 454–490; these read AGEA…PSSS, SSPH…LNSR, and ESSG…CEQG. Positions 28–46 are enriched in low complexity; the sequence is AISDPTTPPSSSQASPSSS. Residues 455 to 469 are compositionally biased toward low complexity; that stretch reads SSGTSTSLLSQTKLT. The span at 472–481 shows a compositional bias: polar residues; it reads SRRQTPSANN. LRR repeat units lie at residues 1447-1470, 1499-1522, 1542-1565, 1566-1588, and 2001-2024; these read KLES…NYED, FSHL…VLSN, SIQI…SHNL, AILR…DVEV, and SSEM…SRSS. Disordered stretches follow at residues 1992 to 2023 and 2046 to 2081; these read GDHV…DSRS and IPSP…SQGS. Residues 1998 to 2020 show a composition bias toward polar residues; that stretch reads VSASSEMKSLDLTGSSSQVQPID. LRR repeat units follow at residues 2128-2151, 2221-2247, and 2313-2336; these read TEQI…VDPE, LLSI…LLSI, and VSAV…LDTD. Residues 2658-2680 are disordered; it reads VNTDEKSETGSPIKSSSGKMDEI. Positions 2666–2675 are enriched in polar residues; sequence TGSPIKSSSG. A BEACH-type PH domain is found at 2704 to 2871; that stretch reads EHLEKIRFRY…EREEVFRNLL (168 aa). Residues 2896–3188 form the BEACH domain; it reads GSRLFKLMAK…QLFQKPHVKR (293 aa). 4 WD repeats span residues 3272–3311, 3322–3361, 3410–3451, and 3483–3522; these read HEGN…PRGS, AHTA…FVRQ, DLIV…DPVS, and FHKQ…LKAS.

The chain is BEACH domain-containing protein A2 from Arabidopsis thaliana (Mouse-ear cress).